The chain runs to 2531 residues: Talin (2531 aa).

The FERM domain occupies 87-401 (RPLRVRMMDE…GYIDIILKKK (315 aa)). An interaction with VIN1 region spans residues 598–621 (GEKLLEAARGLAGAVRHLLKSAEP). The region spanning 2287–2526 (TDWVDPSDPN…KIRHDKYKRH (240 aa)) is the I/LWEQ domain. Residues 2466-2485 (AAKRSSEEGDDEEVSGGGQE) are disordered.

As to quaternary structure, interacts with VIN1 (vinculin); the interaction facilitates VIN1 binding to F-actin.

The protein localises to the cytoplasm. It localises to the cytoskeleton. It is found in the cell cortex. Functionally, probably involved in connections of major cytoskeletal structures to the plasma membrane. The polypeptide is Talin (Oscarella pearsei (Sponge)).